The primary structure comprises 95 residues: Suppressor of silencing 2b (95 aa).

The segment at 8-18 (LHEIIRKLERM) is homotetramerization. Positions 8 to 40 (LHEIIRKLERMNQKKQAQRKRHKLNRKERGHKS) form a coiled coil. Positions 16–49 (ERMNQKKQAQRKRHKLNRKERGHKSPSEQRRSEL) are disordered. Residues 23 to 37 (QAQRKRHKLNRKERG) show a composition bias toward basic residues. The Nuclear localization signal motif lies at 26 to 30 (RKRHK). The segment covering 38–49 (HKSPSEQRRSEL) has biased composition (basic and acidic residues).

This sequence belongs to the cucumovirus/ilarvirus protein 2b family. In terms of assembly, homodimer. Homotetramer (dimer of dimers).

The protein resides in the host nucleus. Acts as a suppressor of RNA-mediated gene silencing, also known as post-transcriptional gene silencing (PTGS), a mechanism of plant viral defense that limits the accumulation of viral RNAs. Forms a homodimer to measure siRNA duplex in a length-preference mode. Binds to both siRNA duplexes (19bp) and long siRNA duplexes (30bp). In Canna (Florist's daisy), this protein is Suppressor of silencing 2b.